A 258-amino-acid polypeptide reads, in one-letter code: Phosphate import ATP-binding protein PstB (258 aa).

In terms of domain architecture, ABC transporter spans 12–253 (LEVKNLNFYY…PARKETEDYI (242 aa)). Residue 44-51 (GPSGCGKS) coordinates ATP.

Belongs to the ABC transporter superfamily. Phosphate importer (TC 3.A.1.7) family. As to quaternary structure, the complex is composed of two ATP-binding proteins (PstB), two transmembrane proteins (PstC and PstA) and a solute-binding protein (PstS).

The protein resides in the cell inner membrane. The catalysed reaction is phosphate(out) + ATP + H2O = ADP + 2 phosphate(in) + H(+). Its function is as follows. Part of the ABC transporter complex PstSACB involved in phosphate import. Responsible for energy coupling to the transport system. In Bordetella parapertussis (strain 12822 / ATCC BAA-587 / NCTC 13253), this protein is Phosphate import ATP-binding protein PstB.